The following is a 193-amino-acid chain: MSSPIDIVEKKLLSDHWFILHKYVFDLKRKNGGVVRQIREVYDRGDGATILLYNRAKGTVILTRQFRIPTYVNGNESGMLLEACAGLLDDYSPEECIRNEAIEETGYAVGNVEKLFDAYMSPGGVTERLHFFAAEYDESLRDNSGGGVEDEDIEVLELPFSEAIAMMNDGRIKDGKTIMLLQHAIIRGWFAKG.

GDP-alpha-D-mannose contacts are provided by residues 38–40 (IRE), Arg-67, and 85–87 (AGL). The 138-residue stretch at 43 to 180 (DRGDGATILL…RIKDGKTIML (138 aa)) folds into the Nudix hydrolase domain. Positions 85, 100, and 104 each coordinate Mg(2+). The Nudix box signature appears at 86 to 106 (GLLDDYSPEECIRNEAIEETG). Residues Glu-104, Glu-127, 150–151 (DE), and Lys-176 contribute to the GDP-alpha-D-mannose site. Glu-151 provides a ligand contact to Mg(2+).

This sequence belongs to the Nudix hydrolase family. NudK subfamily. In terms of assembly, homodimer. It depends on Mg(2+) as a cofactor.

It catalyses the reaction GDP-alpha-D-mannose + H2O = alpha-D-mannose 1-phosphate + GMP + 2 H(+). Its function is as follows. Nucleoside diphosphate sugar hydrolase that hydrolyzes GDP-mannose as its preferred substrate, yielding GMP and mannose-1-phosphate. The chain is GDP-mannose pyrophosphatase (nudK) from Pectobacterium atrosepticum (strain SCRI 1043 / ATCC BAA-672) (Erwinia carotovora subsp. atroseptica).